Consider the following 185-residue polypeptide: UPF0397 protein CPF_1836 (185 aa).

The next 5 membrane-spanning stretches (helical) occupy residues 11–31, 44–64, 71–91, 111–131, and 149–169; these read IVAI…GSLP, AFLA…IGFI, IVFF…VGLI, IFMF…LVAP, and GVIG…ILIA.

It belongs to the UPF0397 family.

Its subcellular location is the cell membrane. The protein is UPF0397 protein CPF_1836 of Clostridium perfringens (strain ATCC 13124 / DSM 756 / JCM 1290 / NCIMB 6125 / NCTC 8237 / Type A).